Reading from the N-terminus, the 320-residue chain is Heterogeneous nuclear ribonucleoprotein A1 (320 aa).

Met1 is subject to N-acetylmethionine. Residue Ser2 is modified to N-acetylserine; in Heterogeneous nuclear ribonucleoprotein A1, N-terminally processed. Phosphoserine is present on Ser2. At Lys3 the chain carries N6-acetyllysine; alternate. Residue Lys3 forms a Glycyl lysine isopeptide (Lys-Gly) (interchain with G-Cter in SUMO2); alternate linkage. Residues Ser4 and Ser6 each carry the phosphoserine modification. The interval 4–94 (SESPKEPEQL…EPKRAVSRED (91 aa)) is globular A domain. Residue Lys8 forms a Glycyl lysine isopeptide (Lys-Gly) (interchain with G-Cter in SUMO2) linkage. RRM domains lie at 14–97 (RKLF…DSQR) and 105–184 (KKIF…LSKQ). The residue at position 22 (Ser22) is a Phosphoserine. A Glycyl lysine isopeptide (Lys-Gly) (interchain with G-Cter in SUMO2) cross-link involves residue Lys78. Residues 95-185 (SQRPGAHLTV…EVRKALSKQE (91 aa)) are globular B domain. Lys113 participates in a covalent cross-link: Glycyl lysine isopeptide (Lys-Gly) (interchain with G-Cter in SUMO). Glycyl lysine isopeptide (Lys-Gly) (interchain with G-Cter in SUMO2) cross-links involve residues Lys179 and Lys183. The disordered stretch occupies residues 182–216 (SKQEMASASSSQRGRSGSGNFGGGRGGGFGGNDNF). Ser192 carries the post-translational modification Phosphoserine; by MKNK2. Arg194 carries the asymmetric dimethylarginine; alternate modification. Arg194 carries the post-translational modification Dimethylated arginine; alternate. Arg194 carries the post-translational modification Omega-N-methylarginine; alternate. The span at 197-216 (SGSGNFGGGRGGGFGGNDNF) shows a compositional bias: gly residues. Position 199 is a phosphoserine (Ser199). 4 positions are modified to asymmetric dimethylarginine; alternate: Arg206, Arg218, Arg225, and Arg232. Arg206 carries the post-translational modification Dimethylated arginine; alternate. 4 positions are modified to omega-N-methylarginine; alternate: Arg206, Arg218, Arg225, and Arg232. The segment at 218–240 (RGGNFSGRGGFGGSRGGGGYGGS) is RNA-binding RGG-box. Arg225 carries the post-translational modification Dimethylated arginine; alternate. A nuclear targeting sequence region spans residues 268–305 (NQSSNFGPMKGGNFGGRSLGPYGGGGQYFAKPRNQGGY). The segment covering 277 to 294 (KGGNFGGRSLGPYGGGGQ) has biased composition (gly residues). Positions 277-320 (KGGNFGGRSLGPYGGGGQYFAKPRNQGGYGGSSSSSSYGSGRRF) are disordered. The residue at position 284 (Arg284) is an Omega-N-methylarginine. The residue at position 285 (Ser285) is a Phosphoserine. Position 298 is an N6-acetyllysine; alternate (Lys298). A Glycyl lysine isopeptide (Lys-Gly) (interchain with G-Cter in SUMO2); alternate cross-link involves residue Lys298. At Arg300 the chain carries Omega-N-methylarginine. Residues 308–320 (SSSSSSYGSGRRF) are compositionally biased toward low complexity. Ser309 bears the Phosphoserine mark. Phosphoserine; by MKNK2 occurs at positions 310, 311, and 312. Phosphoserine is present on residues Ser313 and Ser316. Arg318 is subject to Omega-N-methylarginine.

In terms of assembly, identified in the spliceosome C complex. Identified in a IGF2BP1-dependent mRNP granule complex containing untranslated mRNAs. Interacts with SEPT6, C9orf72, KHDRBS1, UBQLN2. Interacts with PPIA/CYPA. Post-translationally, sumoylated.

It localises to the nucleus. Its subcellular location is the cytoplasm. Functionally, involved in the packaging of pre-mRNA into hnRNP particles, transport of poly(A) mRNA from the nucleus to the cytoplasm and modulation of splice site selection. Plays a role in the splicing of pyruvate kinase PKM by binding repressively to sequences flanking PKM exon 9, inhibiting exon 9 inclusion and resulting in exon 10 inclusion and production of the PKM M2 isoform. Binds to the IRES and thereby inhibits the translation of the apoptosis protease activating factor APAF1. May bind to specific miRNA hairpins. The polypeptide is Heterogeneous nuclear ribonucleoprotein A1 (HNRNPA1) (Macaca mulatta (Rhesus macaque)).